The primary structure comprises 469 residues: Protein RUFY3 (469 aa).

Phosphothreonine is present on residues Thr5 and Thr12. 2 positions are modified to phosphoserine: Ser34 and Ser49. At Thr51 the chain carries Phosphothreonine. The region spanning 95 to 227 is the RUN domain; the sequence is DSDYAPLQQF…IDANFCMKGE (133 aa). Coiled coils occupy residues 271-362 and 422-463; these read NRHL…VEKE and KSEL…AANK.

In terms of assembly, interacts with PAK1. Interacts (via C-terminus) with Ras-related Rab-5 proteins. Interacts (via C-terminus) with Ras-related Rap-2 proteins. Interacts with PIK3CA and PIK3R1. Interacts (via N-terminus) with FSCN1; this interaction induces neuron axon development. Interacts with DBN1. Interacts (via the second coiled coil) with GTP-, but not GDP-bound ARL8A and ARL8B. Interacts with dynactin/DCTN1 and the dynein intermediate chain DYNC1I1/2. Directly interacts with DYNC1LI1. In terms of processing, isoform 1 is partially phosphorylated. Phosphorylated by PAK1. As to expression, expressed in brain (at protein level).

The protein resides in the cytoplasm. The protein localises to the endomembrane system. It localises to the cell projection. Its subcellular location is the invadopodium. It is found in the growth cone. The protein resides in the perikaryon. The protein localises to the filopodium. It localises to the lamellipodium. Its subcellular location is the lysosome. In terms of biological role, ARL8 effector that promotes the coupling of endolysosomes to dynein-dynactin for retrograde transport along microtubules. Acts by binding both GTP-bound ARL8 and dynein-dynactin. In nonneuronal cells, promotes concentration of endolysosomes in the juxtanuclear area. In hippocampal neurons, drives retrograde transport of endolysosomes from the axon to the soma. Plays a role in the generation of neuronal polarity formation and axon growth. Implicated in the formation of a single axon by developing neurons. May inhibit the formation of additional axons by inhibition of PI3K in minor neuronal processes. Plays a role in the formation of F-actin-enriched protrusive structures at the cell periphery. Plays a role in cytoskeletal organization by regulating the subcellular localization of FSCN1 and DBN1 at axonal growth cones. The polypeptide is Protein RUFY3 (Rattus norvegicus (Rat)).